The primary structure comprises 187 residues: Elongation factor P (187 aa).

It belongs to the elongation factor P family.

Its subcellular location is the cytoplasm. It functions in the pathway protein biosynthesis; polypeptide chain elongation. Functionally, involved in peptide bond synthesis. Stimulates efficient translation and peptide-bond synthesis on native or reconstituted 70S ribosomes in vitro. Probably functions indirectly by altering the affinity of the ribosome for aminoacyl-tRNA, thus increasing their reactivity as acceptors for peptidyl transferase. The polypeptide is Elongation factor P (Roseiflexus sp. (strain RS-1)).